A 129-amino-acid polypeptide reads, in one-letter code: Small ribosomal subunit protein uS11c (129 aa).

It belongs to the universal ribosomal protein uS11 family. In terms of assembly, part of the 30S ribosomal subunit.

The protein localises to the plastid. The protein resides in the chloroplast. In Rhodomonas salina (Cryptomonas salina), this protein is Small ribosomal subunit protein uS11c.